The chain runs to 265 residues: HUWE1-associated protein modifying stress responses (265 aa).

Disordered regions lie at residues 1-22 (MEDKKEEGESEIQEHGPEHWFS), 145-170 (RNSRAPPRLTVVSPNRATPTETGSSV), 195-218 (VRSSTPGSPTHVSGSSNTGRRRNG), and 240-265 (GTRKRTSAQCGDVITDSPTHKRNRMI). 2 stretches are compositionally biased toward polar residues: residues 156–170 (VSPNRATPTETGSSV) and 195–212 (VRSSTPGSPTHVSGSSNT).

The protein belongs to the HAPSTR1 family. Oligomer.

The protein resides in the nucleus. The protein localises to the cytoplasm. In terms of biological role, acts as a central player within a network of stress response pathways promoting cellular adaptability. Functions as a negative regulator of TP53/P53 in the cellular response to telomere erosion and probably also DNA damage. This is HUWE1-associated protein modifying stress responses from Xenopus tropicalis (Western clawed frog).